The sequence spans 123 residues: Small ribosomal subunit protein uS13 (123 aa).

The segment at 92–123 is disordered; sequence RKGLPVRGQKTKTNARTRKGPKKLVGAKKKSK.

Belongs to the universal ribosomal protein uS13 family. Part of the 30S ribosomal subunit. Forms a loose heterodimer with protein S19. Forms two bridges to the 50S subunit in the 70S ribosome.

Located at the top of the head of the 30S subunit, it contacts several helices of the 16S rRNA. In the 70S ribosome it contacts the 23S rRNA (bridge B1a) and protein L5 of the 50S subunit (bridge B1b), connecting the 2 subunits; these bridges are implicated in subunit movement. Contacts the tRNAs in the A and P-sites. The protein is Small ribosomal subunit protein uS13 of Clostridium kluyveri (strain NBRC 12016).